The chain runs to 115 residues: DNA-directed RNA polymerase II subunit RPB11-b1 (115 aa).

Belongs to the archaeal Rpo11/eukaryotic RPB11/RPC19 RNA polymerase subunit family. Component of the RNA polymerase II (Pol II) complex consisting of 12 subunits. As to expression, ubiquitously expressed.

The protein resides in the nucleus. In terms of biological role, DNA-dependent RNA polymerase catalyzes the transcription of DNA into RNA using the four ribonucleoside triphosphates as substrates. Component of RNA polymerase II which synthesizes mRNA precursors and many functional non-coding RNAs. Pol II is the central component of the basal RNA polymerase II transcription machinery. It is composed of mobile elements that move relative to each other. RPB11 is part of the core element with the central large cleft. The protein is DNA-directed RNA polymerase II subunit RPB11-b1 (POLR2J2) of Homo sapiens (Human).